The sequence spans 3305 residues: Microtubule-actin cross-linking factor 1, isoforms 6/7 (3305 aa).

Disordered regions lie at residues 1–24, 108–140, 152–202, 239–272, 333–381, 941–1007, and 2865–2896; these read MGKPLSRPDCLRRNPTCLGKGEDE, VQKSAPVPPRRRPNAERKDNVNRRSWKSFMPPN, LSEV…KSVD, AAASGNTDEMQEHRFSSATWPRAMKSSSKGGFSE, EEWE…VAVS, EPAI…PEWS, and SVEPTHAPFMEKSRSGSRKSLNQPTPPPMPIL. Positions 120–129 are enriched in basic and acidic residues; that stretch reads PNAERKDNVN. EF-hand domains follow at residues 2958–2993 and 2994–3029; these read HKKSRVMDFFRRIDKDQDGKITRQEFIDGILASKFP and TTKLEMTAVADIFDRDGDGYIDYYEFVAALHPNKDA. Ca(2+) contacts are provided by Asp-2971, Asp-2973, Asp-2975, Lys-2977, Glu-2982, Asp-3007, Asp-3009, Asp-3011, Tyr-3013, and Glu-3018. Positions 3034-3106 constitute a GAR domain; the sequence is TDADKIEDEV…EFLVKNDPCR (73 aa). The tract at residues 3122–3305 is disordered; sequence PEGASQGMTP…ASPRTPGPKR (184 aa). Positions 3142 to 3176 are enriched in low complexity; it reads SSRAASPTRSSSSASQSNHSCTSMPSSPATPASGT. The span at 3193–3212 shows a compositional bias: polar residues; that stretch reads FHSSRTSLAGDTSNSSSPAS. The segment covering 3227–3241 has biased composition (low complexity); it reads SRPGSRAGSRAGSRA. Residues 3256–3266 show a composition bias toward polar residues; sequence ETQSACSDTSE. Low complexity predominate over residues 3267 to 3278; sequence SSAAGGQGSSRR.

It is found in the cytoplasm. It localises to the cytoskeleton. The protein is Microtubule-actin cross-linking factor 1, isoforms 6/7 of Mus musculus (Mouse).